The chain runs to 784 residues: LPS-assembly protein LptD (784 aa).

Residues 1–24 (MKKRIPTLLATMIATALYSQQGLA) form the signal peptide. 2 disulfides stabilise this stretch: Cys31–Cys724 and Cys173–Cys725.

It belongs to the LptD family. Component of the lipopolysaccharide transport and assembly complex. Interacts with LptE and LptA. In terms of processing, contains two intramolecular disulfide bonds.

It is found in the cell outer membrane. Functionally, together with LptE, is involved in the assembly of lipopolysaccharide (LPS) at the surface of the outer membrane. This Shigella sonnei (strain Ss046) protein is LPS-assembly protein LptD.